The sequence spans 439 residues: GTPase Obg (439 aa).

One can recognise an Obg domain in the interval 4-162 (IEFIDVVDIY…KHIQLELKLL (159 aa)). The OBG-type G domain maps to 163-336 (ADVGLIGYPN…LKYAMWDIIK (174 aa)). GTP contacts are provided by residues 169 to 176 (GYPNVGKS), 194 to 198 (FTTLV), 218 to 221 (DIPG), 288 to 291 (NKSD), and 317 to 319 (SAV). S176 and T196 together coordinate Mg(2+). One can recognise an OCT domain in the interval 361–439 (LVLPDRVDIK…VEGVDFIFKE (79 aa)).

This sequence belongs to the TRAFAC class OBG-HflX-like GTPase superfamily. OBG GTPase family. Monomer. Mg(2+) serves as cofactor.

The protein resides in the cytoplasm. In terms of biological role, an essential GTPase which binds GTP, GDP and possibly (p)ppGpp with moderate affinity, with high nucleotide exchange rates and a fairly low GTP hydrolysis rate. Plays a role in control of the cell cycle, stress response, ribosome biogenesis and in those bacteria that undergo differentiation, in morphogenesis control. This is GTPase Obg from Fervidobacterium nodosum (strain ATCC 35602 / DSM 5306 / Rt17-B1).